Consider the following 286-residue polypeptide: GTP-binding protein 8 (286 aa).

Residues 105 to 278 (KQPEVCFMGR…RCFIAHVTGK (174 aa)) enclose the EngB-type G domain. GTP is bound by residues 113-120 (GRSNVGKS), 142-146 (GHTKK), 160-163 (DMPG), 222-225 (TKID), and 257-259 (VSS). Mg(2+) contacts are provided by Ser-120 and Thr-144.

Belongs to the TRAFAC class TrmE-Era-EngA-EngB-Septin-like GTPase superfamily. EngB GTPase family. The cofactor is Mg(2+).

This Danio rerio (Zebrafish) protein is GTP-binding protein 8 (gtpbp8).